A 147-amino-acid chain; its full sequence is Hemoglobin subunit delta (147 aa).

The 145-residue stretch at 3-147 (HLTPEEKALV…VANALAHKYH (145 aa)) folds into the Globin domain. At Ser-51 the chain carries Phosphoserine. The heme b site is built by His-64 and His-93.

It belongs to the globin family. Heterotetramer of two delta chains and two alpha chains. In terms of tissue distribution, red blood cells.

This is Hemoglobin subunit delta (HBD) from Trichechus manatus (Caribbean manatee).